We begin with the raw amino-acid sequence, 365 residues long: Peptide chain release factor 2 (365 aa).

N5-methylglutamine is present on glutamine 252.

Belongs to the prokaryotic/mitochondrial release factor family. Methylated by PrmC. Methylation increases the termination efficiency of RF2.

The protein resides in the cytoplasm. Peptide chain release factor 2 directs the termination of translation in response to the peptide chain termination codons UGA and UAA. This chain is Peptide chain release factor 2, found in Klebsiella pneumoniae (strain 342).